Consider the following 475-residue polypeptide: Ribulose bisphosphate carboxylase large chain (475 aa).

A propeptide spanning residues 1 to 2 (MS) is cleaved from the precursor. Residue Pro3 is modified to N-acetylproline. An N6,N6,N6-trimethyllysine modification is found at Lys14. Residues Asn123 and Thr173 each coordinate substrate. Catalysis depends on Lys175, which acts as the Proton acceptor. Residue Lys177 coordinates substrate. Positions 201, 203, and 204 each coordinate Mg(2+). An N6-carboxylysine modification is found at Lys201. His294 serves as the catalytic Proton acceptor. Substrate contacts are provided by Arg295, His327, and Ser379.

The protein belongs to the RuBisCO large chain family. Type I subfamily. Heterohexadecamer of 8 large chains and 8 small chains; disulfide-linked. The disulfide link is formed within the large subunit homodimers. Mg(2+) is required as a cofactor. The disulfide bond which can form in the large chain dimeric partners within the hexadecamer appears to be associated with oxidative stress and protein turnover.

The protein resides in the plastid. Its subcellular location is the chloroplast. It catalyses the reaction 2 (2R)-3-phosphoglycerate + 2 H(+) = D-ribulose 1,5-bisphosphate + CO2 + H2O. It carries out the reaction D-ribulose 1,5-bisphosphate + O2 = 2-phosphoglycolate + (2R)-3-phosphoglycerate + 2 H(+). In terms of biological role, ruBisCO catalyzes two reactions: the carboxylation of D-ribulose 1,5-bisphosphate, the primary event in carbon dioxide fixation, as well as the oxidative fragmentation of the pentose substrate in the photorespiration process. Both reactions occur simultaneously and in competition at the same active site. In Citrus sinensis (Sweet orange), this protein is Ribulose bisphosphate carboxylase large chain.